A 163-amino-acid polypeptide reads, in one-letter code: UPF0262 protein RPA4530 (163 aa).

This sequence belongs to the UPF0262 family.

The protein is UPF0262 protein RPA4530 of Rhodopseudomonas palustris (strain ATCC BAA-98 / CGA009).